The following is an 87-amino-acid chain: Small ribosomal subunit protein uS17 (87 aa).

Belongs to the universal ribosomal protein uS17 family. As to quaternary structure, part of the 30S ribosomal subunit.

Functionally, one of the primary rRNA binding proteins, it binds specifically to the 5'-end of 16S ribosomal RNA. The protein is Small ribosomal subunit protein uS17 of Neisseria gonorrhoeae (strain ATCC 700825 / FA 1090).